A 298-amino-acid chain; its full sequence is Probable protein phosphatase 2C 26 (298 aa).

One can recognise a PPM-type phosphatase domain in the interval 48 to 295 (SVGIHAIPHP…DDVTVIVAKV (248 aa)). Mn(2+) is bound by residues aspartate 82, glycine 83, aspartate 213, and aspartate 286.

Belongs to the PP2C family. Requires Mg(2+) as cofactor. The cofactor is Mn(2+).

The catalysed reaction is O-phospho-L-seryl-[protein] + H2O = L-seryl-[protein] + phosphate. It carries out the reaction O-phospho-L-threonyl-[protein] + H2O = L-threonyl-[protein] + phosphate. The protein is Probable protein phosphatase 2C 26 of Arabidopsis thaliana (Mouse-ear cress).